Consider the following 176-residue polypeptide: uncharacterized protein (176 aa).

The protein resides in the host cytoplasm. This is an uncharacterized protein from Escherichia phage Mu (Bacteriophage Mu).